A 380-amino-acid chain; its full sequence is Cobalt-precorrin-5B C(1)-methyltransferase (380 aa).

The protein belongs to the CbiD family.

The catalysed reaction is Co-precorrin-5B + S-adenosyl-L-methionine = Co-precorrin-6A + S-adenosyl-L-homocysteine. It participates in cofactor biosynthesis; adenosylcobalamin biosynthesis; cob(II)yrinate a,c-diamide from sirohydrochlorin (anaerobic route): step 6/10. In terms of biological role, catalyzes the methylation of C-1 in cobalt-precorrin-5B to form cobalt-precorrin-6A. The polypeptide is Cobalt-precorrin-5B C(1)-methyltransferase (Methanosphaera stadtmanae (strain ATCC 43021 / DSM 3091 / JCM 11832 / MCB-3)).